We begin with the raw amino-acid sequence, 325 residues long: Phosphatidylserine decarboxylase proenzyme (325 aa).

Catalysis depends on charge relay system; for autoendoproteolytic cleavage activity residues Asp90, His147, and Ser253. Catalysis depends on Ser253, which acts as the Schiff-base intermediate with substrate; via pyruvic acid; for decarboxylase activity. At Ser253 the chain carries Pyruvic acid (Ser); by autocatalysis. The tract at residues 281–325 is disordered; that stretch reads MASKMSSQKAITPEQTTETPVQASNEFDDNAGETKKDTPSEGADS. Residues 284-305 show a composition bias toward polar residues; the sequence is KMSSQKAITPEQTTETPVQASN.

This sequence belongs to the phosphatidylserine decarboxylase family. PSD-B subfamily. Prokaryotic type I sub-subfamily. As to quaternary structure, heterodimer of a large membrane-associated beta subunit and a small pyruvoyl-containing alpha subunit. It depends on pyruvate as a cofactor. Post-translationally, is synthesized initially as an inactive proenzyme. Formation of the active enzyme involves a self-maturation process in which the active site pyruvoyl group is generated from an internal serine residue via an autocatalytic post-translational modification. Two non-identical subunits are generated from the proenzyme in this reaction, and the pyruvate is formed at the N-terminus of the alpha chain, which is derived from the carboxyl end of the proenzyme. The autoendoproteolytic cleavage occurs by a canonical serine protease mechanism, in which the side chain hydroxyl group of the serine supplies its oxygen atom to form the C-terminus of the beta chain, while the remainder of the serine residue undergoes an oxidative deamination to produce ammonia and the pyruvoyl prosthetic group on the alpha chain. During this reaction, the Ser that is part of the protease active site of the proenzyme becomes the pyruvoyl prosthetic group, which constitutes an essential element of the active site of the mature decarboxylase.

The protein localises to the cell membrane. The enzyme catalyses a 1,2-diacyl-sn-glycero-3-phospho-L-serine + H(+) = a 1,2-diacyl-sn-glycero-3-phosphoethanolamine + CO2. The protein operates within phospholipid metabolism; phosphatidylethanolamine biosynthesis; phosphatidylethanolamine from CDP-diacylglycerol: step 2/2. In terms of biological role, catalyzes the formation of phosphatidylethanolamine (PtdEtn) from phosphatidylserine (PtdSer). The protein is Phosphatidylserine decarboxylase proenzyme of Alteromonas mediterranea (strain DSM 17117 / CIP 110805 / LMG 28347 / Deep ecotype).